A 1059-amino-acid polypeptide reads, in one-letter code: Kinesin-like protein KIN-7K, chloroplastic (1059 aa).

Low complexity-rich tracts occupy residues 1–35 (MSSRPSSSASSRRSSSPFSAGSRRPPTSSSSSAGS) and 43–58 (PRSYSTASSVSSSSHF). The transit peptide at 1–48 (MSSRPSSSASSRRSSSPFSAGSRRPPTSSSSSAGSYLTGRLMPRSYST) directs the protein to the chloroplast. Positions 1-99 (MSSRPSSSAS…SPPSPVPFPS (99 aa)) are disordered. The segment covering 59–69 (FGGGGGSGGGS) has biased composition (gly residues). Residues 70-87 (RSTTPGRRGSSSSSLVGP) show a composition bias toward low complexity. Positions 88–97 (VPSPPSPVPF) are enriched in pro residues. A Kinesin motor domain is found at 114 to 431 (SISVTIRFRP…LKFASRAKRV (318 aa)). ATP is bound at residue 194 to 201 (GVTSSGKT). Residues 435–518 (AARNRMIDEK…IQRLTKLILV (84 aa)) are a coiled coil. The interval 526 to 570 (ALTDTSSHQRHNSVNEEDKVSTSQDSSMLVQNDSATKDSLSSASP) is disordered. Residues 546-569 (STSQDSSMLVQNDSATKDSLSSAS) show a composition bias toward polar residues. Coiled coils occupy residues 640–674 (EGTKNQIDNLEREIREKRRHMRALEQKLMESGEAS), 700–781 (ELEL…EENR), and 862–910 (LEDM…LEND). An RING-type zinc finger spans residues 1013 to 1048 (CKVCFESATAAVLLPCRHFCLCKPCSLACSECPLCR).

This sequence belongs to the TRAFAC class myosin-kinesin ATPase superfamily. Kinesin family. KIN-7 subfamily.

Its subcellular location is the plastid. The protein localises to the chloroplast. The polypeptide is Kinesin-like protein KIN-7K, chloroplastic (Oryza sativa subsp. japonica (Rice)).